The primary structure comprises 405 residues: Bestrophin homolog 14 (405 aa).

4 helical membrane-spanning segments follow: residues 28–48 (LIGFYIAYYIVLAFQWYLLDE), 63–83 (IGAQYIPLSFLLGFFVSLIVA), 223–243 (LVYTQVVAIATYGYFFICLIG), and 256–276 (EITILFPIFTTFQMLFYLGWL).

Belongs to the anion channel-forming bestrophin (TC 1.A.46) family. Calcium-sensitive chloride channel subfamily.

It is found in the membrane. The polypeptide is Bestrophin homolog 14 (best-14) (Caenorhabditis elegans).